The sequence spans 241 residues: Chloride intracellular channel protein 1 (241 aa).

A2 carries the N-acetylalanine modification. The required for insertion into the membrane stretch occupies residues 2 to 90 (AEEQPQVELF…EEFLEAVLCP (89 aa)). N6-acetyllysine is present on K13. Positions 24 to 27 (CPFS) match the G-site motif. C24 and C59 are oxidised to a cystine. A helical membrane pass occupies residues 26–46 (FSQRLFMVLWLKGVTFNVTTV). A GST C-terminal domain is found at 93 to 233 (YPKLAALNPE…PDDEEIELAY (141 aa)). An N6-acetyllysine modification is found at K119. Position 121 is a phosphoserine (S121). K131 bears the N6-acetyllysine mark. S156 carries the post-translational modification Phosphoserine. Y233 bears the Phosphotyrosine mark.

This sequence belongs to the chloride channel CLIC family. As to quaternary structure, monomer. Homodimer (in vitro). Interacts with TRAPPC2. Dimerization requires a conformation change that leads to the exposure of a large hydrophobic surface. In vivo, this may lead to membrane insertion.

The protein resides in the nucleus. Its subcellular location is the nucleus membrane. It is found in the cytoplasm. The protein localises to the cell membrane. It localises to the endoplasmic reticulum. The catalysed reaction is L-dehydroascorbate + 2 glutathione = glutathione disulfide + L-ascorbate. The enzyme catalyses chloride(in) = chloride(out). It catalyses the reaction iodide(out) = iodide(in). It carries out the reaction thiocyanate(in) = thiocyanate(out). The catalysed reaction is nitrate(in) = nitrate(out). The enzyme catalyses bromide(in) = bromide(out). It catalyses the reaction fluoride(in) = fluoride(out). Its function is as follows. In the soluble state, catalyzes glutaredoxin-like thiol disulfide exchange reactions with reduced glutathione as electron donor. Reduces selenite and dehydroascorbate and may act as an antioxidant during oxidative stress response. Can insert into membranes and form voltage-dependent multi-ion conductive channels. Membrane insertion seems to be redox-regulated and may occur only under oxidizing conditions. Involved in regulation of the cell cycle. This chain is Chloride intracellular channel protein 1 (CLIC1), found in Bos taurus (Bovine).